Consider the following 617-residue polypeptide: V-type proton ATPase catalytic subunit A (617 aa).

Phosphothreonine is present on Thr-136. 250-257 (GAFGCGKT) provides a ligand contact to ATP. Ser-384 is modified (phosphoserine; by AMPK).

It belongs to the ATPase alpha/beta chains family. V-ATPase is a heteromultimeric enzyme made up of two complexes: the ATP-hydrolytic V1 complex and the proton translocation V0 complex. The V1 complex consists of three catalytic AB heterodimers that form a heterohexamer, three peripheral stalks each consisting of EG heterodimers, one central rotor including subunits D and F, and the regulatory subunits C and H. The proton translocation complex V0 consists of the proton transport subunit a, a ring of proteolipid subunits c9c'', rotary subunit d, subunits e and f, and the accessory subunits ATP6AP1/Ac45 and ATP6AP2/PRR. Interacts with the V0 complex V-ATPase subunit a4 ATP6V0A4. Interacts with WFS1. Interacts with alpha-crystallin B chain/CRYAB and with MTOR, forming a ternary complex. Phosphorylation at Ser-384 by AMPK down-regulates its enzyme activity.

It localises to the cytoplasm. The protein localises to the cytosol. It is found in the cytoplasmic vesicle. Its subcellular location is the secretory vesicle. The protein resides in the clathrin-coated vesicle membrane. It localises to the lysosome. It carries out the reaction ATP + H2O + 4 H(+)(in) = ADP + phosphate + 5 H(+)(out). Its activity is regulated as follows. ATP hydrolysis occurs at the interface between the nucleotide-binding domains of subunits A and B. ATP hydrolysis triggers a conformational change in the subunits D and F, which induces a shift of subunit d. The c-ring is subsequently rotated and results in a continuous proton translocation across the membrane. Functionally, catalytic subunit of the V1 complex of vacuolar(H+)-ATPase (V-ATPase), a multisubunit enzyme composed of a peripheral complex (V1) that hydrolyzes ATP and a membrane integral complex (V0) that translocates protons. V-ATPase is responsible for acidifying and maintaining the pH of intracellular compartments and in some cell types, is targeted to the plasma membrane, where it is responsible for acidifying the extracellular environment. In aerobic conditions, involved in intracellular iron homeostasis, thus triggering the activity of Fe(2+) prolyl hydroxylase (PHD) enzymes, and leading to HIF1A hydroxylation and subsequent proteasomal degradation. May play a role in neurite development and synaptic connectivity. The sequence is that of V-type proton ATPase catalytic subunit A (ATP6V1A) from Pongo abelii (Sumatran orangutan).